Consider the following 779-residue polypeptide: Endoribonuclease YSH1 (779 aa).

The Zn(2+) site is built by H68, H70, D72, H73, H163, and D184. H408 serves as the catalytic Proton donor. H430 provides a ligand contact to Zn(2+). Residue S517 is modified to Phosphoserine; by ATM or ATR.

This sequence belongs to the metallo-beta-lactamase superfamily. RNA-metabolizing metallo-beta-lactamase-like family. CPSF2/YSH1 subfamily. Component of the cleavage and polyadenylation factor (CPF) complex, which is composed of at least PTI1, SYC1, SSU72, GLC7, MPE1, REF2, PFS2, PTA1, YSH1/BRR5, SWD2, CFT2/YDH1, YTH1, CFT1/YHH1, FIP1 and PAP1. Interacts with FIP1, PFS2, RNA14 and YTH1. Zn(2+) is required as a cofactor.

It is found in the nucleus. In terms of biological role, component of the cleavage and polyadenylation factor (CPF) complex, which plays a key role in polyadenylation-dependent pre-mRNA 3'-end formation and cooperates with cleavage factors including the CFIA complex and NAB4/CFIB. Has endonuclease activity. This chain is Endoribonuclease YSH1 (YSH1), found in Saccharomyces cerevisiae (strain ATCC 204508 / S288c) (Baker's yeast).